We begin with the raw amino-acid sequence, 992 residues long: MGMRPPAGLPSLSKRSRVLLVLALVVAALLLVGPRLISTYTDWLWFGEVGFRGVFTTVLITRLLLFLVVGVVVGGIVWLALLLAYRSRPVFVPVSGPNDPVARYRTTVMTRLRLFGLAIPIAVGLLAGLIAQSSWVTVQLFVNGGAFGVADPEFGLDVGFYTFDLPFYRFVLNWLFVAVLLAFFASLVTHYIFGGLKLAGRGGALTNAARVQLAVLAGTFILLKAVAYWFDRYSLLSSSRKEPTFTGGSYTDMNAVLQAKLILLAIAVICAGAFFAAIFLRDLRIPAMATALLVLSSILVGAVWPLVVEQFSVRPNAADKESAYIERNIAATRQAYGITDDKVEYQDYQGYGTKPPRDVPADVMTIENTRLLDPNILSRTFTQQQQLKNFYGFPPTLDIDRYDIDGQLRDYIVAARELSSKSLTGNQTDWINKHTVYTHGNGLVAAPANRVNAAAGESAEEAANSNSGYPVYMVSDIASQEAGNQVIPVQQPRIYYGEVIADTDADYAIVGGSGGSDPREYDTDTSRYTYTGSGGVPIGNWFNRLAFAAKYTERNILFSGAIGSDSKIIYNRDPRDRVTHVAPWLTADGDSYPAVVDGKVVWIVDAYTTLQDYPYAQRSSLDGLVEDSIDQNTGRLLPRKEVSYIRNSVKATVDAYDGTVKLYQVDQNDPVLDAWMGVFPDAVQPADSIPDELRAHFRYPEDLFKVQREMLAKYHVDDPKEFFTNNAFWSVPSDPTIDTSANQPPYYVLVGDPETGKPSFNLTSAMVGYSREFLSAYLSVKSDPENYGKFTVLQLPTDTQTQGPQQTQNSMISDPRVASERTLLERSNKIQYGNLLTLPIADGGILYVEPMYTERSSTGPNTSTFPQLSRVLVSYREPPPSNSVRVGYAPTLAQALDQVFGAGTGSVATAPSAEEGTPPETGTTPPVDQGAAPAPTAPATPPSGTDVSAAVAELDASLDALTSAQRSGDFAAYGAALARVQKAVAAYEAIPK.

7 helical membrane-spanning segments follow: residues 18–38 (VLLVLALVVAALLLVGPRLIS), 63–83 (LLLFLVVGVVVGGIVWLALLL), 114–134 (LFGLAIPIAVGLLAGLIAQSS), 174–194 (WLFVAVLLAFFASLVTHYIFG), 211–231 (VQLAVLAGTFILLKAVAYWFD), 260–280 (KLILLAIAVICAGAFFAAIFL), and 288–308 (MATALLVLSSILVGAVWPLVV). The interval 904-948 (TGSVATAPSAEEGTPPETGTTPPVDQGAAPAPTAPATPPSGTDVS) is disordered. The span at 908-934 (ATAPSAEEGTPPETGTTPPVDQGAAPA) shows a compositional bias: low complexity.

The protein belongs to the UPF0182 family.

The protein localises to the cell membrane. The sequence is that of UPF0182 protein RHA1_ro06389 from Rhodococcus jostii (strain RHA1).